The sequence spans 428 residues: Bifunctional IPC transferase and DIPP synthase (428 aa).

The interval valine 2–alanine 227 is mobA-like NTP transferase. Residues leucine 8–glycine 10, lysine 25, glutamate 80, and glutamate 116 contribute to the CTP site. Glutamate 116 is a binding site for Mg(2+). The tract at residues isoleucine 228–lysine 425 is CDP-alcohol phosphatidyltransferases. The next 3 membrane-spanning stretches (helical) occupy residues phenylalanine 266–leucine 286, proline 336–tyrosine 356, and methionine 389–isoleucine 409.

The protein in the N-terminal section; belongs to the MobA family. This sequence in the C-terminal section; belongs to the CDP-alcohol phosphatidyltransferase class-I family. The cofactor is Mg(2+).

It localises to the membrane. It catalyses the reaction 1D-myo-inositol 3-phosphate + CTP + H(+) = CDP-1L-myo-inositol + diphosphate. The enzyme catalyses CDP-1L-myo-inositol + 1D-myo-inositol 3-phosphate = bis(1L-myo-inositol) 3,1'-phosphate 1-phosphate + CMP + H(+). Functionally, involved in biosynthesis of di-myo-inositol phosphate (DIP), a widespread organic solute in microorganisms adapted to hot environments. Catalyzes the condensation of CTP and L-myo-inositol-1-phosphate into CDP-L-myo-inositol, as well as the biosynthesis of di-myo-inositol-1,3'-phosphate-1'-phosphate (DIPP) from CDP-L-myo-inositol and L-myo-inositol-1-phosphate. This Aquifex aeolicus (strain VF5) protein is Bifunctional IPC transferase and DIPP synthase (spsI).